The following is a 65-amino-acid chain: uncharacterized protein (65 aa).

A helical membrane pass occupies residues 37-57 (ILAIMTSVLPVLLIYIIWIFI).

Its subcellular location is the cell membrane. This is an uncharacterized protein from Bacillus subtilis (strain 168).